A 437-amino-acid chain; its full sequence is MRRYFGTDGVRGEAGKPPLTPEFVLKLGQAAGAYFRTQEKRPVVLLAKDTRESSDLLEAALAAGLMSQGVRVEHLGVLPTPGVAHLTKALKATAGAVISASHNPYQDNGIKFFGPTGEKLPDEAEEEIERLLLEDHPTRGIGTVGDFREAERMYLDFLLAHAPDLTGLKVGLDLAHGATYRIGPKLFQKAGAEVMAFFNTPDGRNINRGCGSTHPEALSRFVVELGLDLGLAFDGDGDRVQFIDRKGRLFHGDHVLYLAALAFGEKGVVGTVMSNMALEVALKERGLAFHRAAVGDRYVLEKLKETGLALGGEPSGHVIFLRHHTTGDGLLTALLTLKALKALGGDLADWYEALPLYPQVLLNVRVSDKAKVMADPRLGEAVREAEARLGGRGRVNVRPSGTEPVIRVMVEAEEWAEEVARELAERVRALSQEAQAV.

Serine 101 (phosphoserine intermediate) is an active-site residue. Residues serine 101, aspartate 234, aspartate 236, and aspartate 238 each contribute to the Mg(2+) site. At serine 101 the chain carries Phosphoserine.

The protein belongs to the phosphohexose mutase family. Mg(2+) is required as a cofactor. In terms of processing, activated by phosphorylation.

It carries out the reaction alpha-D-glucosamine 1-phosphate = D-glucosamine 6-phosphate. Catalyzes the conversion of glucosamine-6-phosphate to glucosamine-1-phosphate. The sequence is that of Phosphoglucosamine mutase from Thermus thermophilus (strain ATCC BAA-163 / DSM 7039 / HB27).